We begin with the raw amino-acid sequence, 586 residues long: Phosphomethylpyrimidine synthase (586 aa).

The interval 1-59 (MKQSVSAEQIELKSSLPGSKKVYVDGPREGMKVPMREIEQSDTNGVPNPPIRVYDTSGP) is disordered. Basic and acidic residues predominate over residues 22-39 (VYVDGPREGMKVPMREIE). Residues asparagine 193, methionine 222, tyrosine 251, histidine 287, 307-309 (SRG), 348-351 (DGLR), and glutamate 387 contribute to the substrate site. Histidine 391 lines the Zn(2+) pocket. Tyrosine 414 provides a ligand contact to substrate. Histidine 455 provides a ligand contact to Zn(2+). [4Fe-4S] cluster-binding residues include cysteine 535, cysteine 538, and cysteine 543.

It belongs to the ThiC family. [4Fe-4S] cluster is required as a cofactor.

It catalyses the reaction 5-amino-1-(5-phospho-beta-D-ribosyl)imidazole + S-adenosyl-L-methionine = 4-amino-2-methyl-5-(phosphooxymethyl)pyrimidine + CO + 5'-deoxyadenosine + formate + L-methionine + 3 H(+). It functions in the pathway cofactor biosynthesis; thiamine diphosphate biosynthesis. In terms of biological role, catalyzes the synthesis of the hydroxymethylpyrimidine phosphate (HMP-P) moiety of thiamine from aminoimidazole ribotide (AIR) in a radical S-adenosyl-L-methionine (SAM)-dependent reaction. This Bacillus cereus (strain ATCC 10987 / NRS 248) protein is Phosphomethylpyrimidine synthase.